Here is a 256-residue protein sequence, read N- to C-terminus: Short-chain dehydrogenase/reductase cdmF (256 aa).

NADP(+)-binding residues include Val-11, Asp-57, and Arg-119. Ser-137 serves as the catalytic Proton donor. NADP(+) is bound by residues Tyr-151, Lys-155, Gly-183, and Asn-187. Tyr-151 serves as the catalytic Proton acceptor. Residue Lys-155 is the Lowers pKa of active site Tyr of the active site.

It belongs to the short-chain dehydrogenases/reductases (SDR) family.

It catalyses the reaction 3-hydroxypentacecilide A + A = chrodrimanin C + AH2. The enzyme catalyses chrodrimanin F + A = chrodrimanin H + AH2. It functions in the pathway secondary metabolite biosynthesis; terpenoid biosynthesis. Its function is as follows. Short-chain dehydrogenase/reductase; part of the gene cluster that mediates the biosynthesis of chrodrimanin B, a meroterpenoid that acts as a potent blocker of insect GABA-gated chloride channels. The first step of the pathway is the biosynthesis of 6-hydroxymellein by the polyketide synthase cdmE. The prenyltransferase cdmH acts as a 6-hydroxymellein 5-farnesyltransferase and produces the hydrophobic metabolite verruculide C. The FAD-dependent monooxygenase cdmI further converts verruculide C into verruculide B. The terpene cyclase cdmG then produced the pentacyclic molecule 3-hydroxypentacecilide A, the backbone structure of chrodrimanin B, via folding the farnesyl moiety of the substrate into the chair-boat conformation. The short-chain dehydrogenase/reductase cdmF functions as the 3-OH dehydrogenase that oxidizes the C-3 hydroxyl group of 3-hydroxypentacecilide A and produces chrodrimanin C, the dehydrogenated product of 3-hydroxypentacecilide A. The cytochrome P450 monooxygenase cdmJ then accepts both 3-hydroxypentacecilide A and chrodrimanin C and functions as a C-7-beta-hydroxylase to produce respectively chrodrimanin H and chrodrimanin F. The dioxygenase cdmA accepts chrodrimanin H to afford chrodrimanin E, which is further transformed to chrodrimanin A by the dioxygenase cdmD. CdmA can also accept chrodrimanin C as substrate to convert it into verruculide A, which is further converted into chrodrimanin T by cdmD. The last step of the biosynthesis is proposed to be performed by the acetyltransferase cdmC which acetylates chrodrimanin A to yield chrodrimanin B. The pathway may also lead to the production of additional shunt products, including chrodrimanins T and U. The protein is Short-chain dehydrogenase/reductase cdmF of Talaromyces verruculosus (Penicillium verruculosum).